The sequence spans 118 residues: Holo-[acyl-carrier-protein] synthase (118 aa).

Mg(2+) is bound by residues Asp-8 and Glu-58.

This sequence belongs to the P-Pant transferase superfamily. AcpS family. The cofactor is Mg(2+).

The protein resides in the cytoplasm. The catalysed reaction is apo-[ACP] + CoA = holo-[ACP] + adenosine 3',5'-bisphosphate + H(+). Transfers the 4'-phosphopantetheine moiety from coenzyme A to a Ser of acyl-carrier-protein. The polypeptide is Holo-[acyl-carrier-protein] synthase (Listeria monocytogenes serotype 4a (strain HCC23)).